Here is a 568-residue protein sequence, read N- to C-terminus: Cytosolic purine 5'-nucleotidase (568 aa).

Catalysis depends on Asp52, which acts as the Nucleophile. Residues Asp52 and Asp54 each coordinate IMP. Mg(2+) is bound by residues Asp52 and Asp54. Asp54 serves as the catalytic Proton donor. 2 residues coordinate ATP: Arg144 and Asn154. The IMP site is built by Arg202, Asp206, Lys215, Thr249, Asn250, Ser251, and Lys292. Asp351 is a binding site for Mg(2+). Positions 453 and 456 each coordinate ATP. The segment at 528 to 568 (ISEIKPPNLFPQKPQEITHCHDEDDDEEEEEEEEEEEEEEE) is disordered. A required for tetramer assembly region spans residues 548 to 568 (HDEDDDEEEEEEEEEEEEEEE). Residues 550-568 (EDDDEEEEEEEEEEEEEEE) show a composition bias toward acidic residues.

Belongs to the 5'(3')-deoxyribonucleotidase family. In terms of assembly, homotetramer. Mg(2+) is required as a cofactor.

The protein resides in the cytoplasm. It is found in the cytosol. The catalysed reaction is a ribonucleoside 5'-phosphate + H2O = a ribonucleoside + phosphate. The enzyme catalyses a 2'-deoxyribonucleoside + a ribonucleoside 5'-phosphate = a ribonucleoside + a 2'-deoxyribonucleoside 5'-phosphate. It catalyses the reaction IMP + H2O = inosine + phosphate. It carries out the reaction GMP + H2O = guanosine + phosphate. The catalysed reaction is dIMP + H2O = 2'-deoxyinosine + phosphate. The enzyme catalyses dGMP + H2O = 2'-deoxyguanosine + phosphate. It catalyses the reaction XMP + H2O = xanthosine + phosphate. It carries out the reaction inosine + GMP = guanosine + IMP. The catalysed reaction is dGMP + inosine = 2'-deoxyguanosine + IMP. The enzyme catalyses dIMP + inosine = 2'-deoxyinosine + IMP. It catalyses the reaction inosine + UMP = uridine + IMP. It carries out the reaction inosine + CMP = cytidine + IMP. The catalysed reaction is inosine + AMP = IMP + adenosine. With respect to regulation, allosterically activated by various compounds including ATP, 2,3-BPG/2,3-Bisphosphoglyceric acid and Ap4A/P1,P4-bis(5'-adenosyl) tetraphosphate. Binding of an allosteric activator is a prerequisiste to magnesium and substrate binding. Inhibited by inorganic phosphate. Functionally, broad specificity cytosolic 5'-nucleotidase that catalyzes the dephosphorylation of 6-hydroxypurine nucleoside 5'-monophosphates. In addition, possesses a phosphotransferase activity by which it can transfer a phosphate from a donor nucleoside monophosphate to an acceptor nucleoside, preferably inosine, deoxyinosine and guanosine. Has the highest activities for IMP and GMP followed by dIMP, dGMP and XMP. Could also catalyze the transfer of phosphates from pyrimidine monophosphates but with lower efficiency. Through these activities regulates the purine nucleoside/nucleotide pools within the cell. This is Cytosolic purine 5'-nucleotidase (nt5c2) from Xenopus tropicalis (Western clawed frog).